The sequence spans 622 residues: Galactolipid galactosyltransferase SFR2, chloroplastic (622 aa).

Residues 1–3 (MEL) are Stromal-facing. Residues 4-24 (FALLIKVAGLLATVTVGANVV) form a helical; Signal-anchor membrane-spanning segment. Over 25-622 (SYSRFRRQNL…LHPALASPFD (598 aa)) the chain is Cytoplasmic. A beta-D-glucoside contacts are provided by residues histidine 222, 266–267 (NE), tyrosine 377, glutamate 429, tryptophan 467, 474–475 (EW), and phenylalanine 483. Glutamate 267 acts as the Proton donor in catalysis. Residue glutamate 429 is the Nucleophile of the active site.

It belongs to the glycosyl hydrolase 1 family. Expressed in hypocotyls, cotyledons, stems, leaves, pedicels, sepals, anthers and pistils. Limited expression in roots. Not detected in petals or filaments.

It is found in the plastid. The protein localises to the chloroplast. Its subcellular location is the chloroplast outer membrane. It carries out the reaction 2 a 1,2-diacyl-3-O-(beta-D-galactosyl)-sn-glycerol = a 1,2-diacyl-3-O-[beta-D-galactosyl-(1-&gt;6)-beta-D-galactosyl]-sn-glycerol + a 1,2-diacyl-sn-glycerol. With respect to regulation, induced by MgCl(2). In terms of biological role, glycosyl hydrolase family protein acting primarily as a highly specific galactosyltransferase. Synthesizes digalactosyldiacylglycerol from monogalactosyldiacylglycerol in the absence of UDP-galactose in vitro. Hydrolyzes o- and p-nitrophenyl beta-D-glucoside in vitro. Plays a role in freezing tolerance. May play a role in chloroplast protection. This Arabidopsis thaliana (Mouse-ear cress) protein is Galactolipid galactosyltransferase SFR2, chloroplastic.